The sequence spans 73 residues: Large ribosomal subunit protein bL31 (73 aa).

This sequence belongs to the bacterial ribosomal protein bL31 family. Type A subfamily. In terms of assembly, part of the 50S ribosomal subunit.

Its function is as follows. Binds the 23S rRNA. The protein is Large ribosomal subunit protein bL31 of Rhizobium meliloti (strain 1021) (Ensifer meliloti).